Here is a 303-residue protein sequence, read N- to C-terminus: Aspartate carbamoyltransferase catalytic subunit (303 aa).

Carbamoyl phosphate-binding residues include R54 and T55. Position 83 (K83) interacts with L-aspartate. Carbamoyl phosphate is bound by residues R104, H132, and Q135. 2 residues coordinate L-aspartate: R164 and R226. Residues L265 and P266 each contribute to the carbamoyl phosphate site.

It belongs to the aspartate/ornithine carbamoyltransferase superfamily. ATCase family. In terms of assembly, heterooligomer of catalytic and regulatory chains.

The catalysed reaction is carbamoyl phosphate + L-aspartate = N-carbamoyl-L-aspartate + phosphate + H(+). It participates in pyrimidine metabolism; UMP biosynthesis via de novo pathway; (S)-dihydroorotate from bicarbonate: step 2/3. In terms of biological role, catalyzes the condensation of carbamoyl phosphate and aspartate to form carbamoyl aspartate and inorganic phosphate, the committed step in the de novo pyrimidine nucleotide biosynthesis pathway. In Methanocorpusculum labreanum (strain ATCC 43576 / DSM 4855 / Z), this protein is Aspartate carbamoyltransferase catalytic subunit.